Here is an 802-residue protein sequence, read N- to C-terminus: Endoplasmin (802 aa).

The signal sequence occupies residues Met-1–Ala-21. The SRT pseudosubstrate motif motif lies at Ser-42–Thr-44. The N-linked (GlcNAc...) asparagine glycan is linked to Asn-62. Ser-64 carries the post-translational modification Phosphoserine. Asn-107 carries an N-linked (GlcNAc...) asparagine glycan. The ATP site is built by Asn-107, Asp-149, and Asn-162. Position 168 is an N6-(2-hydroxyisobutyryl)lysine (Lys-168). Ser-172 is subject to Phosphoserine. Position 199 (Phe-199) interacts with ATP. N-linked (GlcNAc...) asparagine glycosylation is present at Asn-217. The segment at Thr-288 to Thr-323 is disordered. Acidic residues predominate over residues Val-289–Glu-317. Ser-403 is modified (phosphoserine). Lys-404 carries the N6-succinyllysine modification. A glycan (N-linked (GlcNAc...) asparagine) is linked at Asn-445. Ser-447 is modified (phosphoserine). Lys-479 carries the N6-acetyllysine modification. N-linked (GlcNAc...) asparagine glycosylation is found at Asn-481 and Asn-502. Lys-633 is modified (N6-succinyllysine). The interval Asp-750–Leu-802 is disordered. The segment covering Glu-757–Gln-789 has biased composition (acidic residues). Phosphothreonine is present on Thr-782. The span at Glu-790–Leu-802 shows a compositional bias: basic and acidic residues. Residues Lys-799–Leu-802 carry the Prevents secretion from ER motif.

This sequence belongs to the heat shock protein 90 family. In terms of assembly, homodimer; disulfide-linked. Component of an EIF2 complex at least composed of CELF1/CUGBP1, CALR, CALR3, EIF2S1, EIF2S2, HSP90B1 and HSPA5. Part of a large chaperone multiprotein complex comprising DNAJB11, HSP90B1, HSPA5, HYOU, PDIA2, PDIA4, PDIA6, PPIB, SDF2L1, UGGT1 and very small amounts of ERP29, but not, or at very low levels, CALR nor CANX. Interacts with AIMP1; regulates its retention in the endoplasmic reticulum. Hyperglycosylated form interacts with OS9; promoting its degradation by the endoplasmic reticulum associated degradation (ERAD). Interacts with CNPY3. This interaction is disrupted in the presence of ATP. Interacts with TLR4 and TLR9, but not with TLR3. Interacts with MZB1 in a calcium-dependent manner. Interacts with METTL23. Interacts with IL1B; the interaction facilitates cargo translocation into the ERGIC. Interacts with EIF2AK3. Post-translationally, phosphorylated by CK2. N-glycosylated cotranslationally at Asn-217 by STT3A-containing OST-A complex: this glycosylation is constitutive. In response to various stress, 5 additional facultative sites (Asn-62, Asn-107, Asn-445, Asn-481 and Asn-502) can be glycosylated post-translationally by STT3B-containing OST-B complex, leading to a hyperglycosylated form that is degraded by the ER-associated degradation (ERAD) pathway. In normal conditions, the OST-A complex together with CCDC134 prevent glycosylation at facultative sites during protein folding, thereby preventing hyperglycosylation. Mechanistically, nascent HSP90B1 is tethered during translation to a specialized CCDC134-containing translocon that forms a microenvironment for its folding, in which STT3A associates with the SRT pseudosubstrate motif, and prevents access to facultative glycosylation sites until folding is completed, rendering its facultative sites inaccessible to the OST-B complex.

Its subcellular location is the endoplasmic reticulum lumen. The protein localises to the sarcoplasmic reticulum lumen. The protein resides in the melanosome. The catalysed reaction is ATP + H2O = ADP + phosphate + H(+). In terms of biological role, ATP-dependent chaperone involved in the processing of proteins in the endoplasmic reticulum, regulating their transport. Together with MESD, acts as a modulator of the Wnt pathway by promoting the folding of LRP6, a coreceptor of the canonical Wnt pathway. When associated with CNPY3, required for proper folding of Toll-like receptors. Promotes folding and trafficking of TLR4 to the cell surface. May participate in the unfolding of cytosolic leaderless cargos (lacking the secretion signal sequence) such as the interleukin 1/IL-1 to facilitate their translocation into the ERGIC (endoplasmic reticulum-Golgi intermediate compartment) and secretion; the translocation process is mediated by the cargo receptor TMED10. This is Endoplasmin (HSP90B1) from Oryctolagus cuniculus (Rabbit).